The primary structure comprises 94 residues: Lipolysis-activating peptide 1-beta chain (94 aa).

The N-terminal stretch at 1 to 19 (MKILAVVLISVIVLNTANG) is a signal peptide. In terms of domain architecture, LCN-type CS-alpha/beta spans 20 to 87 (ENYYPQKYTN…YFNALESQCP (68 aa)). 3 disulfide bridges follow: C34-C56, C42-C66, and C46-C68.

Belongs to the long (3 C-C) scorpion toxin superfamily. As to quaternary structure, homodimer; disulfide-linked or monomer (edited version) or heterodimer of an alpha chain (AC P0CI44 or AC P0CI45) and this beta chain (non-edited version). As to expression, expressed by the venom gland.

The protein localises to the secreted. Functionally, the homodimer inhibits HMG-CoA reductase (HMGCR) (32% of inhibition produced by 0.6 uM), a glycoprotein involved in the control of cholesterol biosynthesis. The inhibitory effects of bumarsin are seen at much lower concentrations (0.6 uM) than that for statins such as atorvastatin (5 mM) and simvastatin (10 uM). In addition to inhibition of HMG-CoA reductase, this protein lowers cholesterol levels by inducing steroid hormone synthesis via StAR, and by increasing reverse cholesterol transport mediated by the induction of ABCA1 and APOA1. Its function is as follows. The heterodimer non-edited LVP1 induces lipolysis in rat adipocytes. Induction of lipolysis by LVP1 appears to be mediated through the beta-2 adrenergic receptor pathway (ADRB2). The monomer edited version, similar to alpha-toxins, may modulate voltage-gated sodium channels (Nav) and may block voltage-gated potassium channels (Kv). The protein is Lipolysis-activating peptide 1-beta chain of Lychas mucronatus (Chinese swimming scorpion).